Reading from the N-terminus, the 299-residue chain is Coenzyme PQQ synthesis protein B (299 aa).

The protein belongs to the PqqB family.

Its pathway is cofactor biosynthesis; pyrroloquinoline quinone biosynthesis. Its function is as follows. May be involved in the transport of PQQ or its precursor to the periplasm. This Xanthomonas axonopodis pv. citri (strain 306) protein is Coenzyme PQQ synthesis protein B.